The following is a 91-amino-acid chain: UPF0250 protein PputGB1_4855 (91 aa).

Belongs to the UPF0250 family.

This Pseudomonas putida (strain GB-1) protein is UPF0250 protein PputGB1_4855.